The primary structure comprises 228 residues: 2-phospho-L-lactate guanylyltransferase (228 aa).

The protein belongs to the CofC family. As to quaternary structure, homodimer.

The catalysed reaction is (2S)-2-phospholactate + GTP + H(+) = (2S)-lactyl-2-diphospho-5'-guanosine + diphosphate. Its pathway is cofactor biosynthesis; coenzyme F420 biosynthesis. In terms of biological role, guanylyltransferase that catalyzes the activation of (2S)-2-phospholactate (2-PL) as (2S)-lactyl-2-diphospho-5'-guanosine, via the condensation of 2-PL with GTP. It is involved in the biosynthesis of coenzyme F420, a hydride carrier cofactor. This Methanosphaera stadtmanae (strain ATCC 43021 / DSM 3091 / JCM 11832 / MCB-3) protein is 2-phospho-L-lactate guanylyltransferase.